The sequence spans 170 residues: MGVAMIDALNIATMPIADKVHRHMLASYYALQLDALQAEAKRLGYFFAQADTAATMPPVLADCLAWAVEYRRRCYLYPNCPESWERHTADSMSDGYAQEHCRSMLAALAALGIRLQEGQQAYALLAAEECRQREKASLPPEPSPLSEVEVSSFVDEFFTKLDAPKEEVPT.

This is an uncharacterized protein from Acidithiobacillus ferrooxidans (Thiobacillus ferrooxidans).